Consider the following 348-residue polypeptide: Spore development regulator vosA (348 aa).

A Velvet domain is found at 46–244; it reads ALSPSSCFLS…SDQGVRLRLR (199 aa). A disordered region spans residues 250–294; that stretch reads MMSNKRSISGSGDLTSDQSQQQQQQQPLAKKRREDSVESANPSSL. The segment covering 253 to 266 has biased composition (polar residues); it reads NKRSISGSGDLTSD. Positions 274 to 280 match the Nuclear localization signal motif; it reads QQPLAKK.

It belongs to the velvet family. VosA subfamily. As to quaternary structure, forms a heterodimeric complex with VEL2; the formation of the VEL2-VOS1 complex is light-dependent.

It localises to the nucleus. Functionally, component of the velB-VosA heterodimeric complex that plays a dual role in activating genes associated with spore maturation and repressing certain development-associated genes. The complex binds DNA through the DNA-binding domain of vosA that recognizes an 11-nucleotide consensus sequence 5'-CTGGCCGCGGC-3' consisting of two motifs in the promoters of key developmental regulatory genes. Regulates spore viability, trehalose accumulation, and tolerance to thermal and oxidative as well as ion stresses. Positively regulates conidial pigmentation and pathogenicity on barley. In Cochliobolus sativus (strain ND90Pr / ATCC 201652) (Common root rot and spot blotch fungus), this protein is Spore development regulator vosA.